A 515-amino-acid polypeptide reads, in one-letter code: Acetyltransferase sphE (515 aa).

Catalysis depends on proton acceptor residues H184 and D438.

It belongs to the plant acyltransferase family. In terms of assembly, monomer.

It carries out the reaction sphingofungin B + acetyl-CoA = sphingofungin C + CoA. Its pathway is secondary metabolite biosynthesis. In terms of biological role, acetyltransferase; part of the gene cluster that mediates the biosynthesis of sphingofungins, bioactive molecules acting as sphingolipid inhibitors via inhibiting serine palmitoyl transferase (SPT). Within the pathway, sphE catalyzes the O-acetylation of the C-5 hydroxyl group of sphingofungin B to produce sphingofungin C. SphE can also convert sphingofungin B1 into sphingofungin C1 and sphingofungin B2 into sphingofungin C2. Sphingofungin biosynthesis starts with the PKS sphB that produces an C18 polyketide precursor 3-hydroxyoctadeca-4,10-dienoyl-ACP containing one delta-6 desaturation and one delta-12 desaturation. The aminoacyl transferase sphA uses the sphB product to produce 3-keto-presphingofungin by adding an aminomalonate molecule. SphF then reduces the C-3 ketone of 3-keto-presphingofungin which leads to presphingofungin. The cytochrome P450 monooxygenase sphH converts presphingofungin into sphingofungin B1 which is further converted to sphingofungin B by the dioxygenase sphC. SphC is also able to convert presphingofungin into sphingofungin B2. The acetyltransferase sphE acetylates sphingofungin B to produce sphingofungin C, but can also convert sphingofungin B1 into sphingofungin C1 and sphingofungin B2 into sphingofungin C2. Finally, sphingofungin C can be spontaneously converted into sphingofungin D. The sequence is that of Acetyltransferase sphE from Aspergillus fumigatus (strain CBS 144.89 / FGSC A1163 / CEA10) (Neosartorya fumigata).